The following is a 123-amino-acid chain: Large ribosomal subunit protein bL19 (123 aa).

It belongs to the bacterial ribosomal protein bL19 family.

Its function is as follows. This protein is located at the 30S-50S ribosomal subunit interface and may play a role in the structure and function of the aminoacyl-tRNA binding site. This Thermomicrobium roseum (strain ATCC 27502 / DSM 5159 / P-2) protein is Large ribosomal subunit protein bL19.